Reading from the N-terminus, the 155-residue chain is Transcription antitermination protein NusB (155 aa).

The protein belongs to the NusB family.

In terms of biological role, involved in transcription antitermination. Required for transcription of ribosomal RNA (rRNA) genes. Binds specifically to the boxA antiterminator sequence of the ribosomal RNA (rrn) operons. This Mesorhizobium japonicum (strain LMG 29417 / CECT 9101 / MAFF 303099) (Mesorhizobium loti (strain MAFF 303099)) protein is Transcription antitermination protein NusB.